We begin with the raw amino-acid sequence, 118 residues long: Large ribosomal subunit protein bL19 (118 aa).

Belongs to the bacterial ribosomal protein bL19 family.

Its function is as follows. This protein is located at the 30S-50S ribosomal subunit interface and may play a role in the structure and function of the aminoacyl-tRNA binding site. In Geotalea daltonii (strain DSM 22248 / JCM 15807 / FRC-32) (Geobacter daltonii), this protein is Large ribosomal subunit protein bL19.